The primary structure comprises 419 residues: Haloacid dehalogenase-like hydrolase domain-containing 5 (419 aa).

The first 15 residues, 1–15 (MAALAGLGVLGAGRH), serve as a signal peptide directing secretion.

The protein belongs to the HAD-like hydrolase superfamily.

This is Haloacid dehalogenase-like hydrolase domain-containing 5 from Mus musculus (Mouse).